A 452-amino-acid polypeptide reads, in one-letter code: Eukaryotic translation initiation factor 3 subunit E (452 aa).

The region spanning 257-426 (TDLFFSPAYI…GTVIMNHPPQ (170 aa)) is the PCI domain.

This sequence belongs to the eIF-3 subunit E family. As to quaternary structure, component of the eukaryotic translation initiation factor 3 (eIF-3) complex.

It localises to the cytoplasm. Functionally, component of the eukaryotic translation initiation factor 3 (eIF-3) complex, which is involved in protein synthesis of a specialized repertoire of mRNAs and, together with other initiation factors, stimulates binding of mRNA and methionyl-tRNAi to the 40S ribosome. The eIF-3 complex specifically targets and initiates translation of a subset of mRNAs involved in cell proliferation. In Aspergillus niger (strain ATCC MYA-4892 / CBS 513.88 / FGSC A1513), this protein is Eukaryotic translation initiation factor 3 subunit E (int6).